We begin with the raw amino-acid sequence, 88 residues long: Small ribosomal subunit protein uS15 (88 aa).

The protein belongs to the universal ribosomal protein uS15 family. Part of the 30S ribosomal subunit. Forms a bridge to the 50S subunit in the 70S ribosome, contacting the 23S rRNA.

Its function is as follows. One of the primary rRNA binding proteins, it binds directly to 16S rRNA where it helps nucleate assembly of the platform of the 30S subunit by binding and bridging several RNA helices of the 16S rRNA. Forms an intersubunit bridge (bridge B4) with the 23S rRNA of the 50S subunit in the ribosome. This chain is Small ribosomal subunit protein uS15, found in Psychrobacter arcticus (strain DSM 17307 / VKM B-2377 / 273-4).